The sequence spans 216 residues: Probable RNA 2'-phosphotransferase 1 (216 aa).

The protein belongs to the KptA/TPT1 family.

In terms of biological role, removes the 2'-phosphate from RNA via an intermediate in which the phosphate is ADP-ribosylated by NAD followed by a presumed transesterification to release the RNA and generate ADP-ribose 1''-2''-cyclic phosphate (APPR&gt;P). May function as an ADP-ribosylase. The polypeptide is Probable RNA 2'-phosphotransferase 1 (kptA1) (Archaeoglobus fulgidus (strain ATCC 49558 / DSM 4304 / JCM 9628 / NBRC 100126 / VC-16)).